The chain runs to 282 residues: Putative phosphoenolpyruvate synthase regulatory protein (282 aa).

162 to 169 (GVSRSGKT) serves as a coordination point for ADP.

This sequence belongs to the pyruvate, phosphate/water dikinase regulatory protein family. PSRP subfamily.

The enzyme catalyses [pyruvate, water dikinase] + ADP = [pyruvate, water dikinase]-phosphate + AMP + H(+). The catalysed reaction is [pyruvate, water dikinase]-phosphate + phosphate + H(+) = [pyruvate, water dikinase] + diphosphate. Bifunctional serine/threonine kinase and phosphorylase involved in the regulation of the phosphoenolpyruvate synthase (PEPS) by catalyzing its phosphorylation/dephosphorylation. This is Putative phosphoenolpyruvate synthase regulatory protein from Psychrobacter arcticus (strain DSM 17307 / VKM B-2377 / 273-4).